Consider the following 333-residue polypeptide: Holliday junction branch migration complex subunit RuvB (333 aa).

The large ATPase domain (RuvB-L) stretch occupies residues 1-181 (MNDILNKEPM…FGISSHMEYY (181 aa)). ATP-binding positions include L20, R21, G62, K65, T66, T67, 128–130 (EDF), R171, Y181, and R218. Mg(2+) is bound at residue T66. The interval 182 to 252 (QERDLEEIVK…ITDKALTILD (71 aa)) is small ATPAse domain (RuvB-S). The segment at 255 to 333 (AAGLDYIDQK…HLGYVYNEEE (79 aa)) is head domain (RuvB-H). Residues R291, R310, and R315 each coordinate DNA.

It belongs to the RuvB family. As to quaternary structure, homohexamer. Forms an RuvA(8)-RuvB(12)-Holliday junction (HJ) complex. HJ DNA is sandwiched between 2 RuvA tetramers; dsDNA enters through RuvA and exits via RuvB. An RuvB hexamer assembles on each DNA strand where it exits the tetramer. Each RuvB hexamer is contacted by two RuvA subunits (via domain III) on 2 adjacent RuvB subunits; this complex drives branch migration. In the full resolvosome a probable DNA-RuvA(4)-RuvB(12)-RuvC(2) complex forms which resolves the HJ.

It is found in the cytoplasm. The catalysed reaction is ATP + H2O = ADP + phosphate + H(+). Functionally, the RuvA-RuvB-RuvC complex processes Holliday junction (HJ) DNA during genetic recombination and DNA repair, while the RuvA-RuvB complex plays an important role in the rescue of blocked DNA replication forks via replication fork reversal (RFR). RuvA specifically binds to HJ cruciform DNA, conferring on it an open structure. The RuvB hexamer acts as an ATP-dependent pump, pulling dsDNA into and through the RuvAB complex. RuvB forms 2 homohexamers on either side of HJ DNA bound by 1 or 2 RuvA tetramers; 4 subunits per hexamer contact DNA at a time. Coordinated motions by a converter formed by DNA-disengaged RuvB subunits stimulates ATP hydrolysis and nucleotide exchange. Immobilization of the converter enables RuvB to convert the ATP-contained energy into a lever motion, pulling 2 nucleotides of DNA out of the RuvA tetramer per ATP hydrolyzed, thus driving DNA branch migration. The RuvB motors rotate together with the DNA substrate, which together with the progressing nucleotide cycle form the mechanistic basis for DNA recombination by continuous HJ branch migration. Branch migration allows RuvC to scan DNA until it finds its consensus sequence, where it cleaves and resolves cruciform DNA. The polypeptide is Holliday junction branch migration complex subunit RuvB (Lactococcus lactis subsp. cremoris (strain SK11)).